The sequence spans 97 residues: MKIRPLHDRVIIKRIEAEAKSAGGIILAGTAAQKSTRGEVLAVGTGRILDNGDVKALAVKVGDKVIFNEGYGVKTEKLDGQDVLILSETDILAIVEA.

This sequence belongs to the GroES chaperonin family. As to quaternary structure, heptamer of 7 subunits arranged in a ring. Interacts with the chaperonin GroEL.

It localises to the cytoplasm. Functionally, together with the chaperonin GroEL, plays an essential role in assisting protein folding. The GroEL-GroES system forms a nano-cage that allows encapsulation of the non-native substrate proteins and provides a physical environment optimized to promote and accelerate protein folding. GroES binds to the apical surface of the GroEL ring, thereby capping the opening of the GroEL channel. The protein is Co-chaperonin GroES of Aeromonas salmonicida.